We begin with the raw amino-acid sequence, 255 residues long: Small ribosomal subunit protein eS1 (255 aa).

Alanine 2 carries the N-acetylalanine; partial modification.

The protein belongs to the eukaryotic ribosomal protein eS1 family. In terms of assembly, component of the small ribosomal subunit. Mature ribosomes consist of a small (40S) and a large (60S) subunit. The 40S subunit contains about 33 different proteins and 1 molecule of RNA (18S). The 60S subunit contains about 49 different proteins and 3 molecules of RNA (25S, 5.8S and 5S).

It is found in the cytoplasm. This Arthroderma otae (strain ATCC MYA-4605 / CBS 113480) (Microsporum canis) protein is Small ribosomal subunit protein eS1.